The following is a 369-amino-acid chain: Anhydro-N-acetylmuramic acid kinase (369 aa).

Gly-12–Asp-19 lines the ATP pocket.

It belongs to the anhydro-N-acetylmuramic acid kinase family.

The catalysed reaction is 1,6-anhydro-N-acetyl-beta-muramate + ATP + H2O = N-acetyl-D-muramate 6-phosphate + ADP + H(+). It functions in the pathway amino-sugar metabolism; 1,6-anhydro-N-acetylmuramate degradation. The protein operates within cell wall biogenesis; peptidoglycan recycling. Catalyzes the specific phosphorylation of 1,6-anhydro-N-acetylmuramic acid (anhMurNAc) with the simultaneous cleavage of the 1,6-anhydro ring, generating MurNAc-6-P. Is required for the utilization of anhMurNAc either imported from the medium or derived from its own cell wall murein, and thus plays a role in cell wall recycling. This Shewanella sp. (strain ANA-3) protein is Anhydro-N-acetylmuramic acid kinase.